We begin with the raw amino-acid sequence, 59 residues long: Large ribosomal subunit protein uL30 (59 aa).

The protein belongs to the universal ribosomal protein uL30 family. Part of the 50S ribosomal subunit.

The sequence is that of Large ribosomal subunit protein uL30 from Citrifermentans bemidjiense (strain ATCC BAA-1014 / DSM 16622 / JCM 12645 / Bem) (Geobacter bemidjiensis).